A 304-amino-acid chain; its full sequence is Ornithine carbamoyltransferase (304 aa).

Residues 51–54, Gln78, Arg102, and 129–132 each bind carbamoyl phosphate; these read STRT and HPVQ. L-ornithine contacts are provided by residues Asn157, Asp221, and 225-226; that span reads SM. Carbamoyl phosphate is bound by residues 261-262 and Arg289; that span reads CL.

It belongs to the aspartate/ornithine carbamoyltransferase superfamily. OTCase family.

The protein resides in the cytoplasm. It carries out the reaction carbamoyl phosphate + L-ornithine = L-citrulline + phosphate + H(+). Its pathway is amino-acid degradation; L-arginine degradation via ADI pathway; carbamoyl phosphate from L-arginine: step 2/2. Its function is as follows. Reversibly catalyzes the transfer of the carbamoyl group from carbamoyl phosphate (CP) to the N(epsilon) atom of ornithine (ORN) to produce L-citrulline. In Campylobacter curvus (strain 525.92), this protein is Ornithine carbamoyltransferase.